The sequence spans 259 residues: tRNA-cytidine(32) 2-sulfurtransferase (259 aa).

A PP-loop motif motif is present at residues 37-42 (SGGKDS). C112, C115, and C202 together coordinate [4Fe-4S] cluster.

It belongs to the TtcA family. As to quaternary structure, homodimer. It depends on Mg(2+) as a cofactor. Requires [4Fe-4S] cluster as cofactor.

It localises to the cytoplasm. The catalysed reaction is cytidine(32) in tRNA + S-sulfanyl-L-cysteinyl-[cysteine desulfurase] + AH2 + ATP = 2-thiocytidine(32) in tRNA + L-cysteinyl-[cysteine desulfurase] + A + AMP + diphosphate + H(+). Its pathway is tRNA modification. In terms of biological role, catalyzes the ATP-dependent 2-thiolation of cytidine in position 32 of tRNA, to form 2-thiocytidine (s(2)C32). The sulfur atoms are provided by the cysteine/cysteine desulfurase (IscS) system. In Syntrophotalea carbinolica (strain DSM 2380 / NBRC 103641 / GraBd1) (Pelobacter carbinolicus), this protein is tRNA-cytidine(32) 2-sulfurtransferase.